The primary structure comprises 313 residues: tRNA uridine(34) hydroxylase (313 aa).

Positions 127–225 (SDPDTILIDT…YLETVPEEES (99 aa)) constitute a Rhodanese domain. Residue Cys185 is the Cysteine persulfide intermediate of the active site.

Belongs to the TrhO family.

The catalysed reaction is uridine(34) in tRNA + AH2 + O2 = 5-hydroxyuridine(34) in tRNA + A + H2O. In terms of biological role, catalyzes oxygen-dependent 5-hydroxyuridine (ho5U) modification at position 34 in tRNAs. The polypeptide is tRNA uridine(34) hydroxylase (Gluconobacter oxydans (strain 621H) (Gluconobacter suboxydans)).